Consider the following 529-residue polypeptide: GTPase Obg (529 aa).

An Obg domain is found at 2 to 159; sequence ASFVDRVVLH…SDIVLELKSI (158 aa). The region spanning 160 to 343 is the OBG-type G domain; the sequence is ADIALVGFPS…LGFAMAEIVK (184 aa). Residues 166 to 173, 191 to 195, 212 to 215, 295 to 298, and 324 to 326 contribute to the GTP site; these read GFPSAGKS, FTTLI, DVPG, NKVD, and SAT. 2 residues coordinate Mg(2+): S173 and T193. An OCT domain is found at 363–447; it reads PRAVNETGFR…DDGVVFDWEP (85 aa). The tract at residues 461–529 is disordered; the sequence is GTDIRFADTG…ESGLDSGDES (69 aa). The span at 462–502 shows a compositional bias: basic and acidic residues; the sequence is TDIRFADTGDRPTRSQKREEQQERRDAKAAARAELEAERKA.

This sequence belongs to the TRAFAC class OBG-HflX-like GTPase superfamily. OBG GTPase family. Monomer. Requires Mg(2+) as cofactor.

The protein resides in the cytoplasm. Its function is as follows. An essential GTPase which binds GTP, GDP and possibly (p)ppGpp with moderate affinity, with high nucleotide exchange rates and a fairly low GTP hydrolysis rate. Plays a role in control of the cell cycle, stress response, ribosome biogenesis and in those bacteria that undergo differentiation, in morphogenesis control. This Pseudarthrobacter chlorophenolicus (strain ATCC 700700 / DSM 12829 / CIP 107037 / JCM 12360 / KCTC 9906 / NCIMB 13794 / A6) (Arthrobacter chlorophenolicus) protein is GTPase Obg.